We begin with the raw amino-acid sequence, 156 residues long: Small ribosomal subunit protein uS7 (156 aa).

It belongs to the universal ribosomal protein uS7 family. In terms of assembly, part of the 30S ribosomal subunit. Contacts proteins S9 and S11.

Functionally, one of the primary rRNA binding proteins, it binds directly to 16S rRNA where it nucleates assembly of the head domain of the 30S subunit. Is located at the subunit interface close to the decoding center, probably blocks exit of the E-site tRNA. The sequence is that of Small ribosomal subunit protein uS7 from Pelobacter propionicus (strain DSM 2379 / NBRC 103807 / OttBd1).